We begin with the raw amino-acid sequence, 89 residues long: Large ribosomal subunit protein bL27 (89 aa).

Residues 1–21 (MAHKKAGGSSRNGRDSQSKRL) are disordered.

Belongs to the bacterial ribosomal protein bL27 family.

In Rhizobium leguminosarum bv. trifolii (strain WSM2304), this protein is Large ribosomal subunit protein bL27.